The sequence spans 364 residues: MAQTLLNDTFLRALLREPTDYTPIWLMRQAGRYLPEYNATRARAGSFLGLAKQPDYATEVTLQPLERFPLDAAILFSDILTIPDAMGLGLDFAAGEGPKFAHPVRTEADVAKLAVPDIGATLGYVTDAVREIRRALTDGEGRQRVPLIGFSGSPWTLACYMVEGGGSDDFRTVKSMAYARPDLMHRILDINAQAVAAYLNAQIEAGAQAVMIFDTWGGALADGAYQRFSLDYVRRVLAQLKREHDGARVPAIAFTKGGGLWLEELAATGVDAVGLDWTVNLGRARERVAGRVALQGNLDPTILFAPPEAIRAEARAVLDSYGNHPGHVFNLGHGISQFTPPEHVAELVDEVHRHSRAIRSGAGS.

Residues 28-32 (RQAGR), aspartate 78, tyrosine 160, threonine 215, and histidine 333 contribute to the substrate site.

The protein belongs to the uroporphyrinogen decarboxylase family. Homodimer.

Its subcellular location is the cytoplasm. The catalysed reaction is uroporphyrinogen III + 4 H(+) = coproporphyrinogen III + 4 CO2. It participates in porphyrin-containing compound metabolism; protoporphyrin-IX biosynthesis; coproporphyrinogen-III from 5-aminolevulinate: step 4/4. Catalyzes the decarboxylation of four acetate groups of uroporphyrinogen-III to yield coproporphyrinogen-III. The protein is Uroporphyrinogen decarboxylase of Burkholderia pseudomallei (strain 1106a).